The sequence spans 452 residues: Keratin, type II cytoskeletal 80 (452 aa).

The interval 1 to 82 (MACRSCVVGF…DPAVQQLKNQ (82 aa)) is head. Ser45 carries the post-translational modification Phosphoserine. Residues 82 to 118 (QEKEEMKALNDKFASLIGKVQALEQRNQLLETRWSFL) form a coil 1A region. One can recognise an IF rod domain in the interval 83–394 (EKEEMKALND…KLVEGEEGRM (312 aa)). A linker 1 region spans residues 119-135 (QGQDSAIFDLGHLYEEY). The interval 136–227 (QGRLQEELRK…TIYEQELKDL (92 aa)) is coil 1B. The interval 228 to 251 (AAQVKDVSVTVGMDSRCHIDLSGI) is linker 12. Residues 252–390 (VEEVKAQYDA…ATYRKLVEGE (139 aa)) are coil 2. The tail stretch occupies residues 391-452 (EGRMDSPSAT…YFSQESEVSE (62 aa)). The residue at position 396 (Ser396) is a Phosphoserine. Residues 412-434 (AASRSGLSKAPSRKKKGSKGPVI) are disordered.

This sequence belongs to the intermediate filament family. As to quaternary structure, heterotetramer of two type I and two type II keratins. As to expression, weakly expressed in tongue, but not skin or in any other tissues or organs examined.

The polypeptide is Keratin, type II cytoskeletal 80 (KRT80) (Homo sapiens (Human)).